Consider the following 169-residue polypeptide: UPF0065 protein in clcB-clcD intergenic region (169 aa).

The protein belongs to the UPF0065 (bug) family.

It is found in the periplasm. The polypeptide is UPF0065 protein in clcB-clcD intergenic region (Pseudomonas knackmussii (strain DSM 6978 / CCUG 54928 / LMG 23759 / B13)).